Here is a 376-residue protein sequence, read N- to C-terminus: Protein-glutamate methylesterase/protein-glutamine glutaminase 1 (376 aa).

The region spanning 4–121 (KVLVVDDSSF…ARNRDEAVSL (118 aa)) is the Response regulatory domain. Residue Asp55 is modified to 4-aspartylphosphate. Residues 138–169 (RPVASSTPVQERPQSTLNRPTTGLRREASAQA) form a disordered region. Residues 141–158 (ASSTPVQERPQSTLNRPT) are compositionally biased toward polar residues. The CheB-type methylesterase domain occupies 183 to 376 (SGKKYQLTAI…ERMLVEVGLA (194 aa)). Catalysis depends on residues Ser195, His222, and Asp318.

This sequence belongs to the CheB family. Post-translationally, phosphorylated by CheA. Phosphorylation of the N-terminal regulatory domain activates the methylesterase activity.

Its subcellular location is the cytoplasm. The catalysed reaction is [protein]-L-glutamate 5-O-methyl ester + H2O = L-glutamyl-[protein] + methanol + H(+). It catalyses the reaction L-glutaminyl-[protein] + H2O = L-glutamyl-[protein] + NH4(+). Its function is as follows. Involved in chemotaxis. Part of a chemotaxis signal transduction system that modulates chemotaxis in response to various stimuli. Catalyzes the demethylation of specific methylglutamate residues introduced into the chemoreceptors (methyl-accepting chemotaxis proteins or MCP) by CheR. Also mediates the irreversible deamidation of specific glutamine residues to glutamic acid. The sequence is that of Protein-glutamate methylesterase/protein-glutamine glutaminase 1 from Vibrio vulnificus (strain YJ016).